The primary structure comprises 145 residues: uncharacterized protein (145 aa).

This is an uncharacterized protein from Bacillus anthracis.